Reading from the N-terminus, the 321-residue chain is Lipoyl synthase (321 aa).

Residues C68, C73, C79, C94, C98, C101, and S308 each contribute to the [4Fe-4S] cluster site. The region spanning 80-297 (FNHGTATFMI…KEIALELGFT (218 aa)) is the Radical SAM core domain.

This sequence belongs to the radical SAM superfamily. Lipoyl synthase family. It depends on [4Fe-4S] cluster as a cofactor.

Its subcellular location is the cytoplasm. The enzyme catalyses [[Fe-S] cluster scaffold protein carrying a second [4Fe-4S](2+) cluster] + N(6)-octanoyl-L-lysyl-[protein] + 2 oxidized [2Fe-2S]-[ferredoxin] + 2 S-adenosyl-L-methionine + 4 H(+) = [[Fe-S] cluster scaffold protein] + N(6)-[(R)-dihydrolipoyl]-L-lysyl-[protein] + 4 Fe(3+) + 2 hydrogen sulfide + 2 5'-deoxyadenosine + 2 L-methionine + 2 reduced [2Fe-2S]-[ferredoxin]. The protein operates within protein modification; protein lipoylation via endogenous pathway; protein N(6)-(lipoyl)lysine from octanoyl-[acyl-carrier-protein]: step 2/2. Catalyzes the radical-mediated insertion of two sulfur atoms into the C-6 and C-8 positions of the octanoyl moiety bound to the lipoyl domains of lipoate-dependent enzymes, thereby converting the octanoylated domains into lipoylated derivatives. The chain is Lipoyl synthase from Vibrio vulnificus (strain CMCP6).